The primary structure comprises 299 residues: Urease accessory protein UreD (299 aa).

Belongs to the UreD family. UreD, UreF and UreG form a complex that acts as a GTP-hydrolysis-dependent molecular chaperone, activating the urease apoprotein by helping to assemble the nickel containing metallocenter of UreC. The UreE protein probably delivers the nickel.

Its subcellular location is the cytoplasm. Its function is as follows. Required for maturation of urease via the functional incorporation of the urease nickel metallocenter. This is Urease accessory protein UreD from Haloarcula marismortui (strain ATCC 43049 / DSM 3752 / JCM 8966 / VKM B-1809) (Halobacterium marismortui).